The following is a 53-amino-acid chain: Temporin-SHd (53 aa).

The first 10 residues, 1–10, serve as a signal peptide directing secretion; it reads FLGTINLSLC. Residues 11 to 34 constitute a propeptide that is removed on maturation; sequence EQERDADEEKRDEPDESDVEVEKR. Phe51 bears the Phenylalanine amide mark.

The protein localises to the secreted. It localises to the target cell membrane. Non-amphipathic mildly cationic alpha-helical antimicrobial peptide with potent activity against Gram-positive (including methicillin-resistant Staphylococcus aureus (MRSA)) and Gram-negative bacteria, and some fungi, as well as against Trypanosoma and Leishmania (both promastigote and amastigote forms). Strongly and selectively perturbs anionic bilayer membranes by interacting with the polar head groups and acyl region of the phospholipids, with formation of regions of two coexisting phases, one phase rich in peptide and the other lipid-rich. Shows low hemolytic activity (LC(50)=44 uM) and a low toxicity for human monocytes THP-1 and THP-1-derived macrophages. Is not toxic to human hepatoma-derived cells. This is Temporin-SHd from Pelophylax saharicus (Sahara frog).